Here is a 903-residue protein sequence, read N- to C-terminus: MLGLGSIAKKVFGSPNDRLVKSVRPIIAKINDMEPEFEALDDAGIVAKTAELRNRALNGEKLDDLLPEAFANCREAAKRALGLRAFDVQLIGGLFLHRGNIAEMKTGEGKTLVATFPAYLNGLTGEGVHVVTVNDYLAKRDSEWMGKVFTALGMTTGVVYPRQPDQEKRQAYACDVTYATNNELGFDYLRDNMRGSIAEMAQRGHNFAIVDEVDSILIDEARTPLIISGPTQDRSDLYMSIDKVIPLVQEHHYTLDEKTRQATFTDEGNDFLEETLSAEGILPEGQSLYDPESTTIVHHVTNALRAHKVFTKDKEYIVRDGEVVLVDEFTGRMMPGRRMSEGLHQAIEAKEGCKIQPENVTLASVTFQNYFRLYGTLGGMTGTATTEAEEFADIYGLGVVEIPTNRDIARIDDDDAVYRTGQEKYDAIVETIAEAHKKGQPVLVGTTSIEKSEMLGQLLTKADLPHSILNARQHEQEAQIVADAGKLGAVTIATNMAGRGTDIKLGGNLEFQIMEAIAADPDADPEEIRNRMEVEHATAEQAVKDAGGLYVLATERHESRRIDNQLRGRSGRQGDPGRSSFFLSLEDDLMRIFGSERLDKMLNTLGMKEGEAIVHPWVNKSLERAQAKVEGRNFDIRKQLLKFDDVMNDQRKVVFGQRRDIMGAEDIAEVAKDMRDQVIEDMVDTYMPPKTYADQWDVLGMKEAAQTTLGIDLPIEAWADEDGVDQEVATERLERAADEYMASKAAKFGPEQMRNIEKQVLLQTIDQKWQEHLLTLEHLRSVVGFRGYAQRDPLNEYKTESFQLFESMLDGLRTDVTEKLARIQPLTPEQQEQLMAQLRQQQAAAAGTEAVASAGGETGETAFPNAIPGFIEDDPSTWGNPGRNDDCPCGSGKKFKHCHGRLA.

Residues Gln-89, 107–111 (GEGKT), and Asp-502 contribute to the ATP site. Cys-887, Cys-889, Cys-898, and His-899 together coordinate Zn(2+).

It belongs to the SecA family. In terms of assembly, monomer and homodimer. Part of the essential Sec protein translocation apparatus which comprises SecA, SecYEG and auxiliary proteins SecDF-YajC and YidC. It depends on Zn(2+) as a cofactor.

Its subcellular location is the cell inner membrane. The protein localises to the cytoplasm. The catalysed reaction is ATP + H2O + cellular proteinSide 1 = ADP + phosphate + cellular proteinSide 2.. Functionally, part of the Sec protein translocase complex. Interacts with the SecYEG preprotein conducting channel. Has a central role in coupling the hydrolysis of ATP to the transfer of proteins into and across the cell membrane, serving both as a receptor for the preprotein-SecB complex and as an ATP-driven molecular motor driving the stepwise translocation of polypeptide chains across the membrane. The protein is Protein translocase subunit SecA of Jannaschia sp. (strain CCS1).